The primary structure comprises 282 residues: Elongation factor Ts (282 aa).

The involved in Mg(2+) ion dislocation from EF-Tu stretch occupies residues 80 to 83 (TDFV).

This sequence belongs to the EF-Ts family.

The protein resides in the cytoplasm. Functionally, associates with the EF-Tu.GDP complex and induces the exchange of GDP to GTP. It remains bound to the aminoacyl-tRNA.EF-Tu.GTP complex up to the GTP hydrolysis stage on the ribosome. The chain is Elongation factor Ts (tsf) from Chlamydia pneumoniae (Chlamydophila pneumoniae).